A 118-amino-acid polypeptide reads, in one-letter code: Small ribosomal subunit protein uS13 (118 aa).

The segment at 94-118 is disordered; sequence SLPLRGQRTKTNARTRKGPRKPIRK.

This sequence belongs to the universal ribosomal protein uS13 family. As to quaternary structure, part of the 30S ribosomal subunit. Forms a loose heterodimer with protein S19. Forms two bridges to the 50S subunit in the 70S ribosome.

Located at the top of the head of the 30S subunit, it contacts several helices of the 16S rRNA. In the 70S ribosome it contacts the 23S rRNA (bridge B1a) and protein L5 of the 50S subunit (bridge B1b), connecting the 2 subunits; these bridges are implicated in subunit movement. Contacts the tRNAs in the A and P-sites. The polypeptide is Small ribosomal subunit protein uS13 (Shewanella woodyi (strain ATCC 51908 / MS32)).